The chain runs to 154 residues: Myoglobin (154 aa).

Residues 2-148 (ELSDQEWKHV…FRNDMASKYK (147 aa)) form the Globin domain. His65 is a binding site for nitrite. His65 serves as a coordination point for O2. His94 serves as a coordination point for heme b.

Belongs to the globin family. As to quaternary structure, monomeric.

Its subcellular location is the cytoplasm. The protein resides in the sarcoplasm. It catalyses the reaction Fe(III)-heme b-[protein] + nitric oxide + H2O = Fe(II)-heme b-[protein] + nitrite + 2 H(+). It carries out the reaction H2O2 + AH2 = A + 2 H2O. Its function is as follows. Monomeric heme protein which primary function is to store oxygen and facilitate its diffusion within muscle tissues. Reversibly binds oxygen through a pentacoordinated heme iron and enables its timely and efficient release as needed during periods of heightened demand. Depending on the oxidative conditions of tissues and cells, and in addition to its ability to bind oxygen, it also has a nitrite reductase activity whereby it regulates the production of bioactive nitric oxide. Under stress conditions, like hypoxia and anoxia, it also protects cells against reactive oxygen species thanks to its pseudoperoxidase activity. The chain is Myoglobin (MB) from Alligator mississippiensis (American alligator).